The following is a 270-amino-acid chain: Putative carboxymethylenebutenolidase (270 aa).

Catalysis depends on residues Cys-147, Asp-204, and His-236.

Belongs to the dienelactone hydrolase family.

The catalysed reaction is 2-(5-oxo-2,5-dihydrofuran-2-ylidene)acetate + H2O = 4-oxohex-2-enedioate + H(+). In Salmonella typhi, this protein is Putative carboxymethylenebutenolidase (ysgA).